Reading from the N-terminus, the 4830-residue chain is Siderophore peptide synthetase fer3 (4830 aa).

The interval 197–623 (LDQAEKFPDR…LGRMNAEQVK (427 aa)) is adenylation 1. Residues 751-833 (ANEDPVTQAL…DLIPLLSDTT (83 aa)) form the Carrier 1 domain. O-(pantetheine 4'-phosphoryl)serine is present on Ser-788. The interval 879-1317 (QKIFPTTATQ…HSLMREPETT (439 aa)) is condensation 1. The interval 1358-1781 (FENKAATEPE…IGRRDDLVKL (424 aa)) is adenylation 2. Positions 1929–2005 (GEDGDLQCQV…MLIRGLATKT (77 aa)) constitute a Carrier 2 domain. The residue at position 1966 (Ser-1966) is an O-(pantetheine 4'-phosphoryl)serine. Positions 2048-2503 (IPCSTLQEGM…LLDQVVSLLT (456 aa)) are condensation 2. Residues 2573–2977 (AGTPETACIN…LGRRDEQEKI (405 aa)) are adenylation 3. Residues 3122-3198 (RPLSSLEREI…DIAAELSDSK (77 aa)) enclose the Carrier 3 domain. Ser-3159 carries the post-translational modification O-(pantetheine 4'-phosphoryl)serine. Residues 3232-3621 (KVLPCLPSQE…RDRDELRISA (390 aa)) are condensation 3. Residues 3685 to 3760 (TAAEEQIRDL…GLSKLLDQRQ (76 aa)) enclose the Carrier 4 domain. At Ser-3720 the chain carries O-(pantetheine 4'-phosphoryl)serine. The segment at 3779 to 4199 (RYKATPLQAG…GVQIKAGASD (421 aa)) is condensation 4. Residues 4264-4340 (SLSTAEQDIV…RLTVATETRS (77 aa)) form the Carrier 5 domain. Residue Ser-4301 is modified to O-(pantetheine 4'-phosphoryl)serine. A condensation 5 region spans residues 4381–4708 (VLPLLTGQQQ…DLVSRAEHQQ (328 aa)).

The protein belongs to the NRP synthetase family.

Its pathway is siderophore biosynthesis. Nonribosomal peptide synthetase; part of the gene cluster that mediates the biosynthesis of siderophore ferrichrome A which is contributing to organismal virulence. The first step of ferrichrome A biosynthesis is performed by the HMG-CoA synthase hcs1 which catalyzes the generation of HMG-CoA and CoA using acetoacetyl-CoA and acetyl-CoA as substrates. The enoyl-CoA isomerase/hydratase fer4 then catalyzes the conversion of hcs1-produced HMG-CoA to methylglutaconyl-CoA. The acyltransferase fer5 then fuses the fer4-generated methylglutaconyl-CoA with sid1-generated hydroxyornithine to yield methylglutaconyl hydroxyornithine. Methylglutaconyl hydroxyornithine is then available for use by the NRPS fer3 to generate ferrichrome A. The sequence is that of Siderophore peptide synthetase fer3 from Mycosarcoma maydis (Corn smut fungus).